Here is a 232-residue protein sequence, read N- to C-terminus: GFP-like non-fluorescent chromoprotein FP595 (232 aa).

Positions 63 to 65 (MYG) form a cross-link, 2-iminomethyl-5-imidazolinone (Met-Gly). Y64 is modified ((E)-2,3-didehydrotyrosine).

It belongs to the GFP family. Post-translationally, contains a chromophore consisting of modified amino acid residues. The chromophore is formed by autocatalytic backbone condensation between Xaa-N and Gly-(N+2), oxidation of Tyr-(N+1) to didehydrotyrosine, and formation of a double bond to the alpha-amino nitrogen of residue Tyr-(N+1). Maturation of the chromophore requires nothing other than molecular oxygen. In terms of tissue distribution, tentacle tips.

Its function is as follows. Pigment protein that is intensely purple in color. This chain is GFP-like non-fluorescent chromoprotein FP595, found in Anemonia sulcata (Mediterranean snakelocks sea anemone).